The chain runs to 129 residues: Small ribosomal subunit protein uS8 (129 aa).

The protein belongs to the universal ribosomal protein uS8 family. Part of the 30S ribosomal subunit.

Its function is as follows. One of the primary rRNA binding proteins, it binds directly to 16S rRNA central domain where it helps coordinate assembly of the platform of the 30S subunit. The sequence is that of Small ribosomal subunit protein uS8 from Thermoplasma volcanium (strain ATCC 51530 / DSM 4299 / JCM 9571 / NBRC 15438 / GSS1).